The sequence spans 328 residues: DNA-directed RNA polymerase subunit alpha (328 aa).

The interval 1–232 is alpha N-terminal domain (alpha-NTD); it reads MSTQGFLKPR…DQISVFAALE (232 aa). Residues 248–328 are alpha C-terminal domain (alpha-CTD); it reads IDPVLLRPVD…NWPPLGLERP (81 aa).

The protein belongs to the RNA polymerase alpha chain family. As to quaternary structure, homodimer. The RNAP catalytic core consists of 2 alpha, 1 beta, 1 beta' and 1 omega subunit. When a sigma factor is associated with the core the holoenzyme is formed, which can initiate transcription.

It catalyses the reaction RNA(n) + a ribonucleoside 5'-triphosphate = RNA(n+1) + diphosphate. Its function is as follows. DNA-dependent RNA polymerase catalyzes the transcription of DNA into RNA using the four ribonucleoside triphosphates as substrates. The sequence is that of DNA-directed RNA polymerase subunit alpha from Bordetella bronchiseptica (strain ATCC BAA-588 / NCTC 13252 / RB50) (Alcaligenes bronchisepticus).